Here is a 653-residue protein sequence, read N- to C-terminus: DNA mismatch repair protein MutL (653 aa).

The segment at 375-425 is disordered; it reads QNTPDYPRKAPRDNDRDESDNPQVRERAVSNPWVASPKTASTGKERYGSAS. Over residues 380-389 the composition is skewed to basic and acidic residues; that stretch reads YPRKAPRDND.

The protein belongs to the DNA mismatch repair MutL/HexB family.

In terms of biological role, this protein is involved in the repair of mismatches in DNA. It is required for dam-dependent methyl-directed DNA mismatch repair. May act as a 'molecular matchmaker', a protein that promotes the formation of a stable complex between two or more DNA-binding proteins in an ATP-dependent manner without itself being part of a final effector complex. In Vibrio cholerae serotype O1 (strain ATCC 39541 / Classical Ogawa 395 / O395), this protein is DNA mismatch repair protein MutL.